Consider the following 451-residue polypeptide: Glycylpeptide N-tetradecanoyltransferase (451 aa).

Tetradecanoyl-CoA-binding positions include 34 to 37 (YKFW), 167 to 169 (LCV), and 175 to 179 (SKRLT). L451 serves as the catalytic Proton acceptor; via carboxylate.

This sequence belongs to the NMT family. Monomer.

The protein resides in the cytoplasm. The catalysed reaction is N-terminal glycyl-[protein] + tetradecanoyl-CoA = N-tetradecanoylglycyl-[protein] + CoA + H(+). Functionally, adds a myristoyl group to the N-terminal glycine residue of certain cellular proteins. In Candida glabrata (strain ATCC 2001 / BCRC 20586 / JCM 3761 / NBRC 0622 / NRRL Y-65 / CBS 138) (Yeast), this protein is Glycylpeptide N-tetradecanoyltransferase (NMT1).